The primary structure comprises 558 residues: Dihydroxy-acid dehydratase (558 aa).

Asp81 lines the Mg(2+) pocket. Residue Cys122 coordinates [2Fe-2S] cluster. Positions 123 and 124 each coordinate Mg(2+). Lys124 carries the N6-carboxylysine modification. Cys195 contributes to the [2Fe-2S] cluster binding site. Glu447 is a Mg(2+) binding site. Ser473 serves as the catalytic Proton acceptor.

It belongs to the IlvD/Edd family. Homodimer. The cofactor is [2Fe-2S] cluster. Requires Mg(2+) as cofactor.

The enzyme catalyses (2R)-2,3-dihydroxy-3-methylbutanoate = 3-methyl-2-oxobutanoate + H2O. The catalysed reaction is (2R,3R)-2,3-dihydroxy-3-methylpentanoate = (S)-3-methyl-2-oxopentanoate + H2O. Its pathway is amino-acid biosynthesis; L-isoleucine biosynthesis; L-isoleucine from 2-oxobutanoate: step 3/4. It participates in amino-acid biosynthesis; L-valine biosynthesis; L-valine from pyruvate: step 3/4. Functions in the biosynthesis of branched-chain amino acids. Catalyzes the dehydration of (2R,3R)-2,3-dihydroxy-3-methylpentanoate (2,3-dihydroxy-3-methylvalerate) into 2-oxo-3-methylpentanoate (2-oxo-3-methylvalerate) and of (2R)-2,3-dihydroxy-3-methylbutanoate (2,3-dihydroxyisovalerate) into 2-oxo-3-methylbutanoate (2-oxoisovalerate), the penultimate precursor to L-isoleucine and L-valine, respectively. This Bacillus pumilus (strain SAFR-032) protein is Dihydroxy-acid dehydratase.